The following is a 204-amino-acid chain: Thymidylate kinase (204 aa).

Position 11 to 18 (11 to 18) interacts with ATP; it reads GLDKSGKT.

It belongs to the thymidylate kinase family.

The catalysed reaction is dTMP + ATP = dTDP + ADP. It functions in the pathway pyrimidine metabolism; dTTP biosynthesis. This is Thymidylate kinase (TMK) from Vaccinia virus (strain Ankara) (VACV).